The sequence spans 85 residues: Putative septation protein SpoVG (85 aa).

Belongs to the SpoVG family.

Could be involved in septation. This is Putative septation protein SpoVG from Archaeoglobus fulgidus (strain ATCC 49558 / DSM 4304 / JCM 9628 / NBRC 100126 / VC-16).